An 80-amino-acid chain; its full sequence is Exodeoxyribonuclease 7 small subunit (80 aa).

The protein belongs to the XseB family. As to quaternary structure, heterooligomer composed of large and small subunits.

It localises to the cytoplasm. The enzyme catalyses Exonucleolytic cleavage in either 5'- to 3'- or 3'- to 5'-direction to yield nucleoside 5'-phosphates.. Its function is as follows. Bidirectionally degrades single-stranded DNA into large acid-insoluble oligonucleotides, which are then degraded further into small acid-soluble oligonucleotides. This is Exodeoxyribonuclease 7 small subunit from Rickettsia massiliae (strain Mtu5).